The chain runs to 105 residues: MHVVELRSTNHKDIDADFVLNAKQTYIESVLNIRKMIVNAKTEDDLHGAKIEIAALLKDLNRVLLGGDGLKRSIENNPHFRSLIHFVKNLKRHIAIEFEEFIYQP.

This is an uncharacterized protein from Bacillus phage SPbeta (Bacillus phage SPBc2).